The sequence spans 266 residues: Putative carbamate hydrolase RutD (266 aa).

This sequence belongs to the AB hydrolase superfamily. Hydrolase RutD family.

The catalysed reaction is carbamate + 2 H(+) = NH4(+) + CO2. Its function is as follows. Involved in pyrimidine catabolism. May facilitate the hydrolysis of carbamate, a reaction that can also occur spontaneously. The polypeptide is Putative carbamate hydrolase RutD (Escherichia coli O111:H- (strain 11128 / EHEC)).